Reading from the N-terminus, the 675-residue chain is INO80 complex subunit D (675 aa).

5 disordered regions span residues Met1 to Gln39, Thr183 to Pro203, Leu274 to Val324, Asp473 to Lys523, and Val627 to Ser675. Low complexity-rich tracts occupy residues Gln282 to Ile318, Asn482 to Asn519, and Asn634 to Ser648. Residues Glu664–Ser675 show a composition bias toward basic and acidic residues.

Belongs to the INO80D family. In terms of assembly, component of the chromatin-remodeling INO80 complex.

It is found in the nucleus. In terms of biological role, putative regulatory component of the chromatin remodeling INO80 complex which is involved in transcriptional regulation, DNA replication and probably DNA repair. This Dictyostelium discoideum (Social amoeba) protein is INO80 complex subunit D.